Reading from the N-terminus, the 251-residue chain is Hydroxyacylglutathione hydrolase (251 aa).

Zn(2+) contacts are provided by His-53, His-55, Asp-57, His-58, His-110, Asp-127, and His-165.

The protein belongs to the metallo-beta-lactamase superfamily. Glyoxalase II family. Monomer. Requires Zn(2+) as cofactor.

It catalyses the reaction an S-(2-hydroxyacyl)glutathione + H2O = a 2-hydroxy carboxylate + glutathione + H(+). It functions in the pathway secondary metabolite metabolism; methylglyoxal degradation; (R)-lactate from methylglyoxal: step 2/2. In terms of biological role, thiolesterase that catalyzes the hydrolysis of S-D-lactoyl-glutathione to form glutathione and D-lactic acid. The sequence is that of Hydroxyacylglutathione hydrolase from Escherichia coli O9:H4 (strain HS).